The sequence spans 583 residues: Ankyrin repeat and SOCS box protein 15 (583 aa).

ANK repeat units lie at residues 75–104 (KGWFPLHEAVVQPIQQILETVLDASYKTLW), 110–139 (DGETPLTLAVKAGLVENVKTLLDKGVWPNT), 143–172 (KGETPLLIAIKRGSYDMVSALIKYNTSLDQ), 176–205 (KRWSAMHEAAKQGRKDIITLLLNHRGNVHL), 209–238 (FGVTPLGVAAEYGHCDVLEHLIHKGGDVFA), 242–271 (DGASVLFEAAGGGNPDCISLLLKYGGSGNV), 275–304 (AGHLPIHRAAYEGHYLALKYLIPVTSKHAI), 307–336 (SGLTPIHSAAEGQNAQCLELLIENGFDVNA), 349–378 (ERKTALYFAVSNNDIHCTEVLLAAGADPNL), 379–408 (DPLNCLLVAVRANRHEIVRLLLSYGANVNC), and 416–444 (TRFPSAIQYALNDEIMLRLLLNNGYQVEL). Residues 524–579 (WPEIRQIIENPCSLKHLCRLKIRRVMGLQRLCQPASIQMLPLPAAMRRYLLFKEFD) form the SOCS box domain.

The protein belongs to the ankyrin SOCS box (ASB) family.

It functions in the pathway protein modification; protein ubiquitination. May be a substrate-recognition component of a SCF-like ECS (Elongin-Cullin-SOCS-box protein) E3 ubiquitin-protein ligase complex which mediates the ubiquitination and subsequent proteasomal degradation of target proteins. The polypeptide is Ankyrin repeat and SOCS box protein 15 (Asb15) (Mus musculus (Mouse)).